We begin with the raw amino-acid sequence, 300 residues long: MIQSRQLEAFRAVMLTGGMTSAANLVRITQPAISRLIRDLEEEIGISLFERTGNRLRPTREAGILFKEVSRHFNGIQHIDKVAAELKKSHMGSLRVACYTAPALSFMSGVIQTFIADRPDVSVYLDTVPSQTVLELVSLQHYDLGISILAGDYPGLTTEPVPSFRAVCLLPPGHRLEDKETVHATDLEGESLICLSPVSLLRMQTDAALDSCGVHCNRRIESSLALNLCDLVSRGMGVGIVDPFTADYYSANPVIQRSFDPVVPYHFAIVLPTDSPPPRLVSEFRAALLDALKALPYETI.

The HTH lysR-type domain maps to 1–59; the sequence is MIQSRQLEAFRAVMLTGGMTSAANLVRITQPAISRLIRDLEEEIGISLFERTGNRLRPT. Residues 19-38 constitute a DNA-binding region (H-T-H motif); sequence MTSAANLVRITQPAISRLIR.

The protein belongs to the LysR transcriptional regulatory family.

Its function is as follows. Positive regulatory protein for the noc operon involved in nopaline catabolism and uptake. The polypeptide is Regulatory protein NocR (nocR) (Agrobacterium fabrum (strain C58 / ATCC 33970) (Agrobacterium tumefaciens (strain C58))).